The primary structure comprises 448 residues: Trigger factor (448 aa).

The PPIase FKBP-type domain maps to 172-257 (GDRVTVDFVG…MKKIEWPHLP (86 aa)).

This sequence belongs to the FKBP-type PPIase family. Tig subfamily.

The protein localises to the cytoplasm. The catalysed reaction is [protein]-peptidylproline (omega=180) = [protein]-peptidylproline (omega=0). Functionally, involved in protein export. Acts as a chaperone by maintaining the newly synthesized protein in an open conformation. Functions as a peptidyl-prolyl cis-trans isomerase. The chain is Trigger factor from Burkholderia cenocepacia (strain HI2424).